Here is a 468-residue protein sequence, read N- to C-terminus: Chromosomal replication initiator protein DnaA (468 aa).

The domain I, interacts with DnaA modulators stretch occupies residues M1 to A84. The disordered stretch occupies residues R81 to P104. Residues A84–S131 form a domain II region. Residues N132–A348 are domain III, AAA+ region. ATP is bound by residues G176, G178, K179, and T180. Positions N349–S468 are domain IV, binds dsDNA.

The protein belongs to the DnaA family. In terms of assembly, oligomerizes as a right-handed, spiral filament on DNA at oriC.

The protein localises to the cytoplasm. In terms of biological role, plays an essential role in the initiation and regulation of chromosomal replication. ATP-DnaA binds to the origin of replication (oriC) to initiate formation of the DNA replication initiation complex once per cell cycle. Binds the DnaA box (a 9 base pair repeat at the origin) and separates the double-stranded (ds)DNA. Forms a right-handed helical filament on oriC DNA; dsDNA binds to the exterior of the filament while single-stranded (ss)DNA is stabiized in the filament's interior. The ATP-DnaA-oriC complex binds and stabilizes one strand of the AT-rich DNA unwinding element (DUE), permitting loading of DNA polymerase. After initiation quickly degrades to an ADP-DnaA complex that is not apt for DNA replication. Binds acidic phospholipids. In Vibrio campbellii (strain ATCC BAA-1116), this protein is Chromosomal replication initiator protein DnaA.